We begin with the raw amino-acid sequence, 2381 residues long: Protein Ycf2 (2381 aa).

1655–1662 (GPMETGRS) is a binding site for ATP.

This sequence belongs to the Ycf2 family.

It localises to the plastid. The protein resides in the chloroplast stroma. Probable ATPase of unknown function. Its presence in a non-photosynthetic plant (Epifagus virginiana) and experiments in tobacco indicate that it has an essential function which is probably not related to photosynthesis. In Angiopteris evecta (Mule's foot fern), this protein is Protein Ycf2.